Consider the following 342-residue polypeptide: S-adenosylmethionine:tRNA ribosyltransferase-isomerase (342 aa).

It belongs to the QueA family. Monomer.

The protein resides in the cytoplasm. The catalysed reaction is 7-aminomethyl-7-carbaguanosine(34) in tRNA + S-adenosyl-L-methionine = epoxyqueuosine(34) in tRNA + adenine + L-methionine + 2 H(+). It participates in tRNA modification; tRNA-queuosine biosynthesis. In terms of biological role, transfers and isomerizes the ribose moiety from AdoMet to the 7-aminomethyl group of 7-deazaguanine (preQ1-tRNA) to give epoxyqueuosine (oQ-tRNA). This chain is S-adenosylmethionine:tRNA ribosyltransferase-isomerase, found in Oceanobacillus iheyensis (strain DSM 14371 / CIP 107618 / JCM 11309 / KCTC 3954 / HTE831).